The chain runs to 225 residues: 2-C-methyl-D-erythritol 4-phosphate cytidylyltransferase (225 aa).

It belongs to the IspD/TarI cytidylyltransferase family. IspD subfamily.

It carries out the reaction 2-C-methyl-D-erythritol 4-phosphate + CTP + H(+) = 4-CDP-2-C-methyl-D-erythritol + diphosphate. The protein operates within isoprenoid biosynthesis; isopentenyl diphosphate biosynthesis via DXP pathway; isopentenyl diphosphate from 1-deoxy-D-xylulose 5-phosphate: step 2/6. Its function is as follows. Catalyzes the formation of 4-diphosphocytidyl-2-C-methyl-D-erythritol from CTP and 2-C-methyl-D-erythritol 4-phosphate (MEP). The chain is 2-C-methyl-D-erythritol 4-phosphate cytidylyltransferase from Clostridium perfringens (strain SM101 / Type A).